The chain runs to 511 residues: Maturase K (511 aa).

Belongs to the intron maturase 2 family. MatK subfamily.

Its subcellular location is the plastid. The protein localises to the chloroplast. Functionally, usually encoded in the trnK tRNA gene intron. Probably assists in splicing its own and other chloroplast group II introns. The polypeptide is Maturase K (Hordeum murinum subsp. leporinum (Mouse barley)).